Consider the following 899-residue polypeptide: Translation initiation factor IF-2 (899 aa).

Disordered stretches follow at residues 94–167 (TFTK…VVVK) and 259–309 (FNQE…HGFE). Residues 107–121 (AKARQETEERTRPQE) show a composition bias toward basic and acidic residues. A compositionally biased stretch (low complexity) spans 147–164 (RAAQQKETAKTTSTTTEV). Positions 399–568 (TRPPVVTIMG…LIQSELMELK (170 aa)) constitute a tr-type G domain. Positions 408–415 (GHVDHGKT) are G1. A GTP-binding site is contributed by 408–415 (GHVDHGKT). The interval 433 to 437 (GITQH) is G2. The tract at residues 454–457 (DTPG) is G3. GTP is bound by residues 454 to 458 (DTPGH) and 508 to 511 (NKMD). The tract at residues 508–511 (NKMD) is G4. The tract at residues 544-546 (SAH) is G5.

Belongs to the TRAFAC class translation factor GTPase superfamily. Classic translation factor GTPase family. IF-2 subfamily.

It is found in the cytoplasm. Functionally, one of the essential components for the initiation of protein synthesis. Protects formylmethionyl-tRNA from spontaneous hydrolysis and promotes its binding to the 30S ribosomal subunits. Also involved in the hydrolysis of GTP during the formation of the 70S ribosomal complex. This Acinetobacter baylyi (strain ATCC 33305 / BD413 / ADP1) protein is Translation initiation factor IF-2.